The primary structure comprises 554 residues: Glutamine--tRNA ligase (554 aa).

Residues 34 to 44 carry the 'HIGH' region motif; the sequence is PEPNGYLHIGH. Residues 35 to 37 and 41 to 47 each bind ATP; these read EPN and HIGHAKS. L-glutamine contacts are provided by Asp67 and Tyr212. ATP contacts are provided by residues Thr231, 261 to 262, and 269 to 271; these read RL and MSK. Residues 268–272 carry the 'KMSKS' region motif; sequence VMSKR. Residues 317 to 324 are interaction with tRNA; it reads TKQDNTIE.

It belongs to the class-I aminoacyl-tRNA synthetase family. As to quaternary structure, monomer.

It localises to the cytoplasm. It catalyses the reaction tRNA(Gln) + L-glutamine + ATP = L-glutaminyl-tRNA(Gln) + AMP + diphosphate. This is Glutamine--tRNA ligase from Escherichia coli (strain 55989 / EAEC).